The following is a 377-amino-acid chain: Flap endonuclease 1 (377 aa).

An N-domain region spans residues 1–104 (MGIQGLAKLL…GELAKRTERR (104 aa)). Residue D34 participates in Mg(2+) binding. The DNA site is built by R47 and R70. Mg(2+)-binding residues include D86, E158, E160, D179, and D181. Residues 122–253 (NIDKFSRRLV…KRSVDLIRQH (132 aa)) are I-domain. E158 contributes to the DNA binding site. Positions 231 and 233 each coordinate DNA. A Mg(2+)-binding site is contributed by D233. Residues 336–344 (TQGRLDSFF) are interaction with PCNA. Positions 337–377 (QGRLDSFFKVLPSPANKRKLQDGKGSQNKKAKTGGKFKRPK) are disordered. The span at 363–377 (QNKKAKTGGKFKRPK) shows a compositional bias: basic residues.

It belongs to the XPG/RAD2 endonuclease family. FEN1 subfamily. In terms of assembly, interacts with PCNA. Three molecules of FEN1 bind to one PCNA trimer with each molecule binding to one PCNA monomer. PCNA stimulates the nuclease activity without altering cleavage specificity. It depends on Mg(2+) as a cofactor. Phosphorylated. Phosphorylation upon DNA damage induces relocalization to the nuclear plasma.

It localises to the nucleus. The protein resides in the nucleolus. Its subcellular location is the nucleoplasm. It is found in the mitochondrion. In terms of biological role, structure-specific nuclease with 5'-flap endonuclease and 5'-3' exonuclease activities involved in DNA replication and repair. During DNA replication, cleaves the 5'-overhanging flap structure that is generated by displacement synthesis when DNA polymerase encounters the 5'-end of a downstream Okazaki fragment. It enters the flap from the 5'-end and then tracks to cleave the flap base, leaving a nick for ligation. Also involved in the long patch base excision repair (LP-BER) pathway, by cleaving within the apurinic/apyrimidinic (AP) site-terminated flap. Acts as a genome stabilization factor that prevents flaps from equilibrating into structures that lead to duplications and deletions. Also possesses 5'-3' exonuclease activity on nicked or gapped double-stranded DNA, and exhibits RNase H activity. Also involved in replication and repair of rDNA and in repairing mitochondrial DNA. The sequence is that of Flap endonuclease 1 from Nematostella vectensis (Starlet sea anemone).